A 289-amino-acid polypeptide reads, in one-letter code: BTB/POZ domain-containing protein KCTD7 (289 aa).

The span at 1–10 (MVVVTGQSKG) shows a compositional bias: polar residues. The disordered stretch occupies residues 1 to 35 (MVVVTGQSKGSGDPDEAMSSSDAEDDFQEPATPTA). In terms of domain architecture, BTB spans 51–149 (EVVPLNVGGM…HLEDVQPLKG (99 aa)).

The protein resides in the cell membrane. It is found in the cytoplasm. It localises to the cytosol. May be involved in the control of excitability of cortical neurons. This Gallus gallus (Chicken) protein is BTB/POZ domain-containing protein KCTD7 (KCTD7).